We begin with the raw amino-acid sequence, 201 residues long: Dephospho-CoA kinase (201 aa).

The 200-residue stretch at 2-201 (MIGLTGGIAS…KRWKVIPEDQ (200 aa)) folds into the DPCK domain. Residue 10–15 (ASGKSS) participates in ATP binding.

It belongs to the CoaE family.

The protein resides in the cytoplasm. The enzyme catalyses 3'-dephospho-CoA + ATP = ADP + CoA + H(+). It participates in cofactor biosynthesis; coenzyme A biosynthesis; CoA from (R)-pantothenate: step 5/5. Functionally, catalyzes the phosphorylation of the 3'-hydroxyl group of dephosphocoenzyme A to form coenzyme A. The chain is Dephospho-CoA kinase from Halalkalibacterium halodurans (strain ATCC BAA-125 / DSM 18197 / FERM 7344 / JCM 9153 / C-125) (Bacillus halodurans).